Reading from the N-terminus, the 417-residue chain is Multifunctional CCA protein (417 aa).

ATP is bound by residues Gly8 and Arg11. CTP is bound by residues Gly8 and Arg11. Mg(2+) is bound by residues Asp21 and Asp23. Residues Arg91, Arg137, and Arg140 each contribute to the ATP site. The CTP site is built by Arg91, Arg137, and Arg140. One can recognise an HD domain in the interval 225–326 (SGIHTLMTLQ…LNVLKKTDAF (102 aa)).

This sequence belongs to the tRNA nucleotidyltransferase/poly(A) polymerase family. Bacterial CCA-adding enzyme type 1 subfamily. Monomer. Can also form homodimers and oligomers. Mg(2+) serves as cofactor. Requires Ni(2+) as cofactor.

It carries out the reaction a tRNA precursor + 2 CTP + ATP = a tRNA with a 3' CCA end + 3 diphosphate. The enzyme catalyses a tRNA with a 3' CCA end + 2 CTP + ATP = a tRNA with a 3' CCACCA end + 3 diphosphate. Catalyzes the addition and repair of the essential 3'-terminal CCA sequence in tRNAs without using a nucleic acid template. Adds these three nucleotides in the order of C, C, and A to the tRNA nucleotide-73, using CTP and ATP as substrates and producing inorganic pyrophosphate. tRNA 3'-terminal CCA addition is required both for tRNA processing and repair. Also involved in tRNA surveillance by mediating tandem CCA addition to generate a CCACCA at the 3' terminus of unstable tRNAs. While stable tRNAs receive only 3'-terminal CCA, unstable tRNAs are marked with CCACCA and rapidly degraded. The protein is Multifunctional CCA protein of Neisseria meningitidis serogroup C (strain 053442).